A 577-amino-acid chain; its full sequence is Glucose-6-phosphate 1-dehydrogenase, chloroplastic (577 aa).

Residues 1-20 (MGVQLRLNPCSSSSAATSPS) are disordered. Residues 1–63 (MGVQLRLNPC…QPRKHFEVFS (63 aa)) constitute a chloroplast transit peptide. Over residues 11-20 (SSSSAATSPS) the composition is skewed to low complexity. NADP(+) is bound by residues 97–104 (GASGDLAK) and Arg-131. A disulfide bond links Cys-149 and Cys-157. Lys-234 contributes to the NADP(+) binding site. Residues Lys-234, 264 to 268 (HYLGK), Glu-302, and Asp-321 each bind D-glucose 6-phosphate. His-326 serves as the catalytic Proton acceptor. Lys-419 is a binding site for NADP(+). Positions 422 and 427 each coordinate D-glucose 6-phosphate. NADP(+) contacts are provided by Arg-428, Arg-432, and Arg-461. Position 463 (Gln-463) interacts with D-glucose 6-phosphate. Residues 469-471 (YLK) and Arg-554 contribute to the NADP(+) site.

Belongs to the glucose-6-phosphate dehydrogenase family. As to quaternary structure, homodimer. In terms of tissue distribution, green tissues, leaves and chloroplasts.

It is found in the plastid. The protein resides in the chloroplast. The catalysed reaction is D-glucose 6-phosphate + NADP(+) = 6-phospho-D-glucono-1,5-lactone + NADPH + H(+). The protein operates within carbohydrate degradation; pentose phosphate pathway; D-ribulose 5-phosphate from D-glucose 6-phosphate (oxidative stage): step 1/3. With respect to regulation, regulated by metabolites. Post-translationally inactivated by cysteine-mediated redox modification via the ferredoxin-thioredoxin system in the light and this avoids futile cycles with photosynthetic CO2 fixation. Catalyzes the rate-limiting step of the oxidative pentose-phosphate pathway, which represents a route for the dissimilation of carbohydrates besides glycolysis. The main function of this enzyme is to provide reducing power (NADPH) and pentose phosphates for fatty acid and nucleic acid synthesis which are involved in membrane synthesis and cell division. This Solanum tuberosum (Potato) protein is Glucose-6-phosphate 1-dehydrogenase, chloroplastic.